Reading from the N-terminus, the 332-residue chain is Glycerol-3-phosphate dehydrogenase [NAD(P)+] (332 aa).

NADPH-binding residues include Trp13, Lys34, and Lys108. Residues Lys108, Gly136, and Ser138 each contribute to the sn-glycerol 3-phosphate site. Ala140 provides a ligand contact to NADPH. Sn-glycerol 3-phosphate is bound by residues Lys191, Asp244, Ser254, Arg255, and Asn256. The Proton acceptor role is filled by Lys191. Arg255 is a binding site for NADPH. NADPH is bound by residues Val279 and Glu281.

Belongs to the NAD-dependent glycerol-3-phosphate dehydrogenase family.

It is found in the cytoplasm. The enzyme catalyses sn-glycerol 3-phosphate + NAD(+) = dihydroxyacetone phosphate + NADH + H(+). It carries out the reaction sn-glycerol 3-phosphate + NADP(+) = dihydroxyacetone phosphate + NADPH + H(+). The protein operates within membrane lipid metabolism; glycerophospholipid metabolism. In terms of biological role, catalyzes the reduction of the glycolytic intermediate dihydroxyacetone phosphate (DHAP) to sn-glycerol 3-phosphate (G3P), the key precursor for phospholipid synthesis. This chain is Glycerol-3-phosphate dehydrogenase [NAD(P)+], found in Francisella tularensis subsp. novicida (strain U112).